A 617-amino-acid polypeptide reads, in one-letter code: mRNA-decapping enzyme 1B (617 aa).

Alanine 2 is modified (N-acetylalanine). At serine 147 the chain carries Phosphoserine. Phosphotyrosine is present on tyrosine 191. Disordered stretches follow at residues 195-222 (NLIK…LDPE) and 243-266 (TVEP…KLPI). The span at 205–219 (SENQQQRIPQPNQTL) shows a compositional bias: polar residues. Residues 252–261 (QQQQQQQQQQ) are compositionally biased toward low complexity. Phosphoserine occurs at positions 275 and 336. The segment at 362–426 (TPGAANKCDP…VGHQAHGREQ (65 aa)) is disordered. The segment covering 371-381 (PSTPAPASSAA) has biased composition (low complexity). Residue threonine 392 is modified to Phosphothreonine. A phosphoserine mark is found at serine 448 and serine 511.

It belongs to the DCP1 family. Interacts with DCP1A. As to quaternary structure, (Microbial infection) Interacts with rotavirus A non-structural protein 2; this interaction probably plays a role in the sequestration of DCP1B in viral factories. Interacts with rotavirus A non-structural protein 5; this interaction probably plays a role in its sequestration in viral factories.

Its subcellular location is the cytoplasm. The protein localises to the nucleus. The enzyme catalyses a 5'-end (N(7)-methyl 5'-triphosphoguanosine)-ribonucleoside in mRNA + H2O = N(7)-methyl-GDP + a 5'-end phospho-ribonucleoside in mRNA + 2 H(+). Functionally, may play a role in the degradation of mRNAs, both in normal mRNA turnover and in nonsense-mediated mRNA decay. May remove the 7-methyl guanine cap structure from mRNA molecules, yielding a 5'-phosphorylated mRNA fragment and 7m-GDP. The protein is mRNA-decapping enzyme 1B (DCP1B) of Homo sapiens (Human).